The chain runs to 293 residues: Protein orai (293 aa).

The Cytoplasmic segment spans residues 1-122 (MPRSHDPSRV…RAQLKASSRT (122 aa)). A disordered region spans residues 62 to 81 (STAGGGSRNGVGSKEGSVTS). A helical transmembrane segment spans residues 123 to 141 (SALLAGFAMVCLVELQYDQ). Topologically, residues 142–146 (STPKP) are extracellular. A helical transmembrane segment spans residues 147–167 (LLIVLGVVTSLLVSVHLLALM). At 168 to 198 (MSTCILPYMEATGCTQDSPHIKLKFYIDLSW) the chain is on the cytoplasmic side. Residues 199-219 (LFSTCIGLLLFLVEIGVIFYV) form a helical membrane-spanning segment. The Extracellular segment spans residues 220-230 (KFTAVGYPTAG). Residues 231 to 251 (YITTAMLVPVGVVFVVFSYLI) form a helical membrane-spanning segment. The Cytoplasmic segment spans residues 252 to 293 (HKNRVSHSLGRFKHKVDTMKQFLDVEANLQKSTLAPSTIRDI).

This sequence belongs to the Orai family. As to expression, expressed in gonad sheath cells, hypodermis, intestine and spermatheca. Coexpressed with stim-1.

It localises to the membrane. Functionally, ca(2+) release-activated Ca(2+)-like (CRAC-like) channel subunit which mediates Ca(2+) influx and increase in Ca(2+)-selective current by synergy with the Ca(2+) sensor, stim-1. Required for Ca(2+) and IP3-dependent contractile activity of sheath cells and the spermatheca. Affects brood size and somatic cell function. The protein is Protein orai (orai-1) of Caenorhabditis elegans.